Here is a 302-residue protein sequence, read N- to C-terminus: NAD kinase 2 (302 aa).

The Proton acceptor role is filled by Asp79. Residues 79–80 (DG), 153–154 (NE), Asp183, 194–199 (TAYSLS), Ala218, and Asn252 each bind NAD(+).

This sequence belongs to the NAD kinase family. A divalent metal cation is required as a cofactor.

It is found in the cytoplasm. The catalysed reaction is NAD(+) + ATP = ADP + NADP(+) + H(+). Involved in the regulation of the intracellular balance of NAD and NADP, and is a key enzyme in the biosynthesis of NADP. Catalyzes specifically the phosphorylation on 2'-hydroxyl of the adenosine moiety of NAD to yield NADP. This Prochlorococcus marinus subsp. pastoris (strain CCMP1986 / NIES-2087 / MED4) protein is NAD kinase 2.